We begin with the raw amino-acid sequence, 630 residues long: Zinc finger protein 37 homolog (630 aa).

3 disordered regions span residues 1–45 (MSVS…SAAE), 77–172 (KPDM…PSKK), and 193–285 (HSRN…KHEK). A compositionally biased stretch (basic and acidic residues) spans 14 to 30 (ETVDRRRSAETTKEAGR). The 72-residue stretch at 32-103 (LEMAVSEPEA…KGKRPSQGCP (72 aa)) folds into the KRAB domain. Phosphoserine is present on S42. Residues 110 to 122 (KQKETDGKVQKDD) show a composition bias toward basic and acidic residues. Positions 161 to 172 (NNLHKKHVPSKK) are enriched in basic residues. The segment covering 193-206 (HSRNCVKRKSDAAK) has biased composition (basic and acidic residues). The span at 221–231 (KGKKQTGKKHE) shows a compositional bias: basic residues. 2 stretches are compositionally biased toward basic and acidic residues: residues 232 to 243 (KLSSHSSSDKCN) and 260 to 274 (IKQD…HEKS). 2 consecutive C2H2-type zinc fingers follow at residues 293-315 (YECN…QRVH) and 321-343 (YECN…QRTH). The C2H2-type 3; atypical zinc finger occupies 349 to 367 (YECIQCGKAHGHKHALTDH). 9 consecutive C2H2-type zinc fingers follow at residues 377–399 (YECA…VRSH), 405–427 (YECK…VRTH), 433–455 (YECN…MRIH), 461–483 (FECN…QRTH), 489–511 (YKCN…MRTH), 517–539 (FECN…QRVH), 545–567 (YECN…QRTH), 573–595 (YECN…QRSH), and 601–623 (YECN…VKTH).

It belongs to the krueppel C2H2-type zinc-finger protein family. In terms of tissue distribution, expressed at low level in several tissues including fetal cartilage.

It localises to the nucleus. In terms of biological role, may be involved in transcriptional regulation. The chain is Zinc finger protein 37 homolog (ZFP37) from Homo sapiens (Human).